The sequence spans 64 residues: Large ribosomal subunit protein bL33c (64 aa).

The protein belongs to the bacterial ribosomal protein bL33 family.

The protein resides in the plastid. It is found in the chloroplast. The chain is Large ribosomal subunit protein bL33c from Phaeodactylum tricornutum (strain CCAP 1055/1).